The sequence spans 89 residues: MALSAESKAALVKEFQVAEGDTGSPEVQVALLTKNIEGLQGHFKAHIHDHHSRRGLIRMVNQRRKLLDYLKRKDAARYTSLIKKLGLRR.

The protein belongs to the universal ribosomal protein uS15 family. In terms of assembly, part of the 30S ribosomal subunit. Forms a bridge to the 50S subunit in the 70S ribosome, contacting the 23S rRNA.

One of the primary rRNA binding proteins, it binds directly to 16S rRNA where it helps nucleate assembly of the platform of the 30S subunit by binding and bridging several RNA helices of the 16S rRNA. In terms of biological role, forms an intersubunit bridge (bridge B4) with the 23S rRNA of the 50S subunit in the ribosome. The protein is Small ribosomal subunit protein uS15 of Marinomonas sp. (strain MWYL1).